We begin with the raw amino-acid sequence, 155 residues long: Ribosomal RNA large subunit methyltransferase H (155 aa).

S-adenosyl-L-methionine is bound by residues Ile-71, Gly-103, and 122-127 (FGRMVW).

This sequence belongs to the RNA methyltransferase RlmH family. As to quaternary structure, homodimer.

It is found in the cytoplasm. It carries out the reaction pseudouridine(1915) in 23S rRNA + S-adenosyl-L-methionine = N(3)-methylpseudouridine(1915) in 23S rRNA + S-adenosyl-L-homocysteine + H(+). Functionally, specifically methylates the pseudouridine at position 1915 (m3Psi1915) in 23S rRNA. In Cereibacter sphaeroides (strain ATCC 17025 / ATH 2.4.3) (Rhodobacter sphaeroides), this protein is Ribosomal RNA large subunit methyltransferase H.